We begin with the raw amino-acid sequence, 138 residues long: ATP synthase epsilon chain (138 aa).

Belongs to the ATPase epsilon chain family. As to quaternary structure, F-type ATPases have 2 components, CF(1) - the catalytic core - and CF(0) - the membrane proton channel. CF(1) has five subunits: alpha(3), beta(3), gamma(1), delta(1), epsilon(1). CF(0) has three main subunits: a, b and c.

It is found in the cell inner membrane. Its function is as follows. Produces ATP from ADP in the presence of a proton gradient across the membrane. This is ATP synthase epsilon chain from Cupriavidus necator (strain ATCC 17699 / DSM 428 / KCTC 22496 / NCIMB 10442 / H16 / Stanier 337) (Ralstonia eutropha).